We begin with the raw amino-acid sequence, 24 residues long: General odorant-binding protein (24 aa).

The protein belongs to the PBP/GOBP family. As to quaternary structure, homodimer. As to expression, antenna.

Functionally, present in the aqueous fluid surrounding olfactory sensory dendrites and are thought to aid in the capture and transport of hydrophobic odorants into and through this fluid. The polypeptide is General odorant-binding protein (Antheraea polyphemus (Polyphemus moth)).